A 490-amino-acid polypeptide reads, in one-letter code: N-succinylglutamate 5-semialdehyde dehydrogenase (490 aa).

220–225 (GSANTG) is an NAD(+) binding site. Catalysis depends on residues Glu-243 and Cys-277.

It belongs to the aldehyde dehydrogenase family. AstD subfamily.

It carries out the reaction N-succinyl-L-glutamate 5-semialdehyde + NAD(+) + H2O = N-succinyl-L-glutamate + NADH + 2 H(+). It functions in the pathway amino-acid degradation; L-arginine degradation via AST pathway; L-glutamate and succinate from L-arginine: step 4/5. Its function is as follows. Catalyzes the NAD-dependent reduction of succinylglutamate semialdehyde into succinylglutamate. This chain is N-succinylglutamate 5-semialdehyde dehydrogenase, found in Shigella dysenteriae serotype 1 (strain Sd197).